The sequence spans 3131 residues: Enniatin synthase (3131 aa).

The segment at 53–466 (ADDKQRAVGH…VEKVDMMTQE (414 aa)) is condensation 1. Positions 186–212 (NDEHPRQFETPDSSQATPEEDLQPNPS) are disordered. Residues 495 to 887 (SQSPNKAAVA…GRMDSQVKIR (393 aa)) form an adenylation 1 region. Positions 1010–1086 (SSGTDTYTKL…GLKAIVIGTS (77 aa)) constitute a Carrier 1 domain. Ser-1047 carries the O-(pantetheine 4'-phosphoryl)serine modification. Residues 1105–1534 (SYAQNRMWFL…ETCISVLPLT (430 aa)) are condensation 2. The tract at residues 1563–1960 (FREQAAANPE…GRMDNQFKIR (398 aa)) is adenylation 2. An S-adenosyl-L-methionine-dependent N-methyltransferase region spans residues 2021 to 2177 (EGWQDHFESG…YLAEVIDGLI (157 aa)). Carrier domains follow at residues 2504-2578 (FPIS…RQGL) and 2598-2671 (APRT…ESSH). An O-(pantetheine 4'-phosphoryl)serine mark is found at Ser-2538 and Ser-2632. The condensation 3 stretch occupies residues 2718 to 3123 (QDVYPSTQMQ…RHVLEEVCKT (406 aa)).

It belongs to the ATP-dependent AMP-binding enzyme family. Pantetheine 4'-phosphate serves as cofactor. The N-terminus is blocked.

It participates in antibiotic biosynthesis; enniatin biosynthesis. With respect to regulation, the N-methylation activity is inhibited by S-adenosyl-L-homocysteine and sinefugin. Nonribosomal peptide synthetase that synthesizes enniatin by coupling three D-hydroxycarboxylic acids and three L-amino acids via amide and ester bonds in an alternating fashion. Whereas ESYN1 can accept different amino acids as precursors (L -valine, L-isoleucine or L-leucine), only one species of D-hydroxycarboxylic acid can be found in natural enniatin isolates (D-hydroxyisovaleric acid, D-Hiv). D-Hiv stems from L-valine deanimation by a valine aminotransferase to 2-keto-isovaleric acid (2-Kiv), which becomes subsequently reduced by a keto-isovaleric acid reductase (KivR) to D-Hiv. Peptide bond formation and N-methylation of the amino acid occur before three enzyme-bound dipeptidols are condensed to a hexapeptidol. In Fusarium equiseti (Fusarium scirpi), this protein is Enniatin synthase.